Here is a 587-residue protein sequence, read N- to C-terminus: UDP-N-acetylmuramoylalanine--D-glutamate ligase (587 aa).

Positions 124-147 (DHLVPPESPLSDASDISDASDATD) are disordered. Low complexity predominate over residues 132–147 (PLSDASDISDASDATD). 214-220 (GTNGKTT) lines the ATP pocket.

The protein belongs to the MurCDEF family.

The protein resides in the cytoplasm. The catalysed reaction is UDP-N-acetyl-alpha-D-muramoyl-L-alanine + D-glutamate + ATP = UDP-N-acetyl-alpha-D-muramoyl-L-alanyl-D-glutamate + ADP + phosphate + H(+). It participates in cell wall biogenesis; peptidoglycan biosynthesis. In terms of biological role, cell wall formation. Catalyzes the addition of glutamate to the nucleotide precursor UDP-N-acetylmuramoyl-L-alanine (UMA). This chain is UDP-N-acetylmuramoylalanine--D-glutamate ligase, found in Polaromonas sp. (strain JS666 / ATCC BAA-500).